A 122-amino-acid polypeptide reads, in one-letter code: MIQQETRLKVADNSGAREVLTIKVLGGSGRKTANIGDVIVCTVKNATPGGVVKKGDVVKAVIVRTKSGVRRNDGSYIKFDENACVIIRDDKGPRGTRIFGPVARELREGNFMKIVSLAPEVL.

The protein belongs to the universal ribosomal protein uL14 family. Part of the 50S ribosomal subunit. Forms a cluster with proteins L3 and L19. In the 70S ribosome, L14 and L19 interact and together make contacts with the 16S rRNA in bridges B5 and B8.

In terms of biological role, binds to 23S rRNA. Forms part of two intersubunit bridges in the 70S ribosome. The protein is Large ribosomal subunit protein uL14 of Staphylococcus aureus (strain MW2).